We begin with the raw amino-acid sequence, 461 residues long: ATP synthase subunit beta (461 aa).

151 to 158 (GGAGVGKT) lines the ATP pocket.

This sequence belongs to the ATPase alpha/beta chains family. As to quaternary structure, F-type ATPases have 2 components, CF(1) - the catalytic core - and CF(0) - the membrane proton channel. CF(1) has five subunits: alpha(3), beta(3), gamma(1), delta(1), epsilon(1). CF(0) has three main subunits: a(1), b(2) and c(9-12). The alpha and beta chains form an alternating ring which encloses part of the gamma chain. CF(1) is attached to CF(0) by a central stalk formed by the gamma and epsilon chains, while a peripheral stalk is formed by the delta and b chains.

The protein localises to the cell inner membrane. It carries out the reaction ATP + H2O + 4 H(+)(in) = ADP + phosphate + 5 H(+)(out). In terms of biological role, produces ATP from ADP in the presence of a proton gradient across the membrane. The catalytic sites are hosted primarily by the beta subunits. The protein is ATP synthase subunit beta of Colwellia psychrerythraea (strain 34H / ATCC BAA-681) (Vibrio psychroerythus).